A 380-amino-acid chain; its full sequence is Cytochrome b (380 aa).

The next 4 helical transmembrane spans lie at 34–54 (FGSLLGICLITQILTGLLLAM), 78–99 (WLIRNLHANGASLFFICVYLHI), 114–134 (WNTGIILLLTLMATAFVGYVL), and 179–199 (FFALHFLLPFLIAGLTLIHLT). Heme b-binding residues include H84 and H98. Heme b-binding residues include H183 and H197. H202 serves as a coordination point for a ubiquinone. 4 helical membrane passes run 227 to 247 (LKDLLGAALMLSPLAILALFT), 289 to 309 (LGGVLALAASVLILFLSPFLH), 321 to 341 (LSQLLFWFLVANLLILTWVGS), and 348 to 368 (FIIIGQLASFTYFTTLLVLLP).

This sequence belongs to the cytochrome b family. The cytochrome bc1 complex contains 11 subunits: 3 respiratory subunits (MT-CYB, CYC1 and UQCRFS1), 2 core proteins (UQCRC1 and UQCRC2) and 6 low-molecular weight proteins (UQCRH/QCR6, UQCRB/QCR7, UQCRQ/QCR8, UQCR10/QCR9, UQCR11/QCR10 and a cleavage product of UQCRFS1). This cytochrome bc1 complex then forms a dimer. It depends on heme b as a cofactor.

It localises to the mitochondrion inner membrane. In terms of biological role, component of the ubiquinol-cytochrome c reductase complex (complex III or cytochrome b-c1 complex) that is part of the mitochondrial respiratory chain. The b-c1 complex mediates electron transfer from ubiquinol to cytochrome c. Contributes to the generation of a proton gradient across the mitochondrial membrane that is then used for ATP synthesis. This Herpetotheres cachinnans (Laughing falcon) protein is Cytochrome b (MT-CYB).